The primary structure comprises 237 residues: Ribonuclease PH (237 aa).

Residues R86 and 124–126 contribute to the phosphate site; that span reads GTR.

It belongs to the RNase PH family. Homohexameric ring arranged as a trimer of dimers.

The catalysed reaction is tRNA(n+1) + phosphate = tRNA(n) + a ribonucleoside 5'-diphosphate. In terms of biological role, phosphorolytic 3'-5' exoribonuclease that plays an important role in tRNA 3'-end maturation. Removes nucleotide residues following the 3'-CCA terminus of tRNAs; can also add nucleotides to the ends of RNA molecules by using nucleoside diphosphates as substrates, but this may not be physiologically important. Probably plays a role in initiation of 16S rRNA degradation (leading to ribosome degradation) during starvation. The protein is Ribonuclease PH of Shewanella baltica (strain OS223).